The primary structure comprises 445 residues: Trigger factor (445 aa).

One can recognise a PPIase FKBP-type domain in the interval 172 to 257 (GDQVVINFVG…VKSVNWAHLP (86 aa)).

The protein belongs to the FKBP-type PPIase family. Tig subfamily.

It is found in the cytoplasm. It carries out the reaction [protein]-peptidylproline (omega=180) = [protein]-peptidylproline (omega=0). Involved in protein export. Acts as a chaperone by maintaining the newly synthesized protein in an open conformation. Functions as a peptidyl-prolyl cis-trans isomerase. This Polynucleobacter necessarius subsp. necessarius (strain STIR1) protein is Trigger factor.